The following is a 141-amino-acid chain: Vesicle-associated membrane protein 4 (141 aa).

Positions 1–51 (MPPKFKRHLNDDDVTGSVKSERRNLLEDDSDEEEDFFLRGPSGPRFGPRND) are disordered. Topologically, residues 1–118 (MPPKFKRHLN…MWWRGCKIKA (118 aa)) are cytoplasmic. A phosphoserine mark is found at Ser-17 and Ser-30. Residues 52-112 (KIKHVQNQVD…KQLRRQMWWR (61 aa)) form the v-SNARE coiled-coil homology domain. A helical; Anchor for type IV membrane protein transmembrane segment spans residues 119-139 (IMALAAAILLLMIIILIVVKF). The Vesicular portion of the chain corresponds to 140–141 (RT).

Belongs to the synaptobrevin family. In terms of assembly, identified in a complex containing STX6, STX12, VAMP4 and VTI1A. Interacts with BAIAP3; this interaction is increased in the presence of calcium. (Microbial infection) Targeted and hydrolyzed by C.botulinum neurotoxin type X (BoNT/X) which hydrolyzes the 87-Arg-|-Ser-88 bond and probably inhibits neurotransmitter release. It remains unknown whether BoNT/X is ever produced, or what organisms it targets.

Its subcellular location is the golgi apparatus. The protein resides in the trans-Golgi network membrane. In terms of biological role, involved in the pathway that functions to remove an inhibitor (probably synaptotagmin-4) of calcium-triggered exocytosis during the maturation of secretory granules. May be a marker for this sorting pathway that is critical for remodeling the secretory response of granule. The sequence is that of Vesicle-associated membrane protein 4 (Vamp4) from Mus musculus (Mouse).